The following is a 292-amino-acid chain: NAD kinase (292 aa).

Asp-73 acts as the Proton acceptor in catalysis. Residues 73–74 (DG), 147–148 (NE), His-158, Arg-175, Asp-177, 188–193 (TGYSLS), and Gln-247 each bind NAD(+).

It belongs to the NAD kinase family. A divalent metal cation is required as a cofactor.

Its subcellular location is the cytoplasm. The enzyme catalyses NAD(+) + ATP = ADP + NADP(+) + H(+). Involved in the regulation of the intracellular balance of NAD and NADP, and is a key enzyme in the biosynthesis of NADP. Catalyzes specifically the phosphorylation on 2'-hydroxyl of the adenosine moiety of NAD to yield NADP. The chain is NAD kinase from Buchnera aphidicola subsp. Schizaphis graminum (strain Sg).